The sequence spans 384 residues: Urea transporter 1 (384 aa).

5 helical membrane-spanning segments follow: residues 61–81, 85–105, 111–131, 138–158, and 168–188; these read ISQV…AGLL, PWWA…ALLL, AIAA…MAVF, FWWL…FSSA, and LPVF…ATGH. The N-linked (GlcNAc...) asparagine glycan is linked to Asn-206. The next 4 membrane-spanning stretches (helical) occupy residues 250 to 270, 279 to 299, 305 to 325, and 327 to 347; these read LMCL…LSLA, GLWG…FMAL, LLAL…THLM, and AVHL…FLLL.

The protein belongs to the urea transporter family. Homotrimer; each subunit contains a pore through which urea permeates. Identified in a complex with STOM. In terms of tissue distribution, expressed in brain, spleen, kidney, testis and lung, with highest levels in brain.

The protein localises to the cell membrane. It localises to the basolateral cell membrane. It carries out the reaction urea(in) = urea(out). Mediates the transport of urea driven by a concentration gradient across the cell membrane. Mediates the transport of urea across the cell membranes of erythrocytes and the renal inner medullary collecting duct which is critical to the urinary concentrating mechanism. Facilitates water transport in erythrocytes. The sequence is that of Urea transporter 1 (Slc14a1) from Rattus norvegicus (Rat).